The primary structure comprises 208 residues: Ribosomal RNA large subunit methyltransferase E (208 aa).

Gly62, Trp64, Asp82, Asp98, and Asp123 together coordinate S-adenosyl-L-methionine. The active-site Proton acceptor is the Lys163.

It belongs to the class I-like SAM-binding methyltransferase superfamily. RNA methyltransferase RlmE family.

The protein resides in the cytoplasm. The catalysed reaction is uridine(2552) in 23S rRNA + S-adenosyl-L-methionine = 2'-O-methyluridine(2552) in 23S rRNA + S-adenosyl-L-homocysteine + H(+). Functionally, specifically methylates the uridine in position 2552 of 23S rRNA at the 2'-O position of the ribose in the fully assembled 50S ribosomal subunit. This is Ribosomal RNA large subunit methyltransferase E from Actinobacillus pleuropneumoniae serotype 5b (strain L20).